A 197-amino-acid polypeptide reads, in one-letter code: ATP-dependent Clp protease proteolytic subunit (197 aa).

Catalysis depends on Ser-98, which acts as the Nucleophile. Residue His-123 is part of the active site.

This sequence belongs to the peptidase S14 family. As to quaternary structure, fourteen ClpP subunits assemble into 2 heptameric rings which stack back to back to give a disk-like structure with a central cavity, resembling the structure of eukaryotic proteasomes.

The protein localises to the cytoplasm. It catalyses the reaction Hydrolysis of proteins to small peptides in the presence of ATP and magnesium. alpha-casein is the usual test substrate. In the absence of ATP, only oligopeptides shorter than five residues are hydrolyzed (such as succinyl-Leu-Tyr-|-NHMec, and Leu-Tyr-Leu-|-Tyr-Trp, in which cleavage of the -Tyr-|-Leu- and -Tyr-|-Trp bonds also occurs).. Cleaves peptides in various proteins in a process that requires ATP hydrolysis. Has a chymotrypsin-like activity. Plays a major role in the degradation of misfolded proteins. The protein is ATP-dependent Clp protease proteolytic subunit of Natranaerobius thermophilus (strain ATCC BAA-1301 / DSM 18059 / JW/NM-WN-LF).